Reading from the N-terminus, the 538-residue chain is Sodium/hydrogen exchanger 1 (538 aa).

At 1–19 the chain is on the cytoplasmic side; that stretch reads MLDSLVSKLPSLSTSDHAS. The chain crosses the membrane as a helical span at residues 20–40; it reads VVALNLFVALLCACIVLGHLL. Residues 41–45 lie on the Vacuolar side of the membrane; sequence EENRW. The chain crosses the membrane as a helical span at residues 46–66; sequence MNESITALLIGLGTGVTILLI. Over 67–73 the chain is Cytoplasmic; the sequence is SKGKSSH. The helical intramembrane region spans 74 to 94; it reads LLVFSEDLFFIYLLPPIIFNA. The Cytoplasmic portion of the chain corresponds to 95 to 106; the sequence is GFQVKKKQFFRN. A helical transmembrane segment spans residues 107-127; sequence FVTIMLFGAVGTIISCTIISL. Residues 128 to 146 lie on the Vacuolar side of the membrane; sequence GVTQFFKKLDIGTFDLGDY. 2 consecutive intramembrane regions (helical) follow at residues 147–166 and 172–192; these read LAIG…QVLN and LLYS…VVVF. The Vacuolar segment spans residues 193–216; it reads NAIQSFDLTHLNHEAAFHLLGNFL. The helical transmembrane segment at 217–237 threads the bilayer; it reads YLFLLSTLLGAATGLISAYVI. Topologically, residues 238-262 are cytoplasmic; the sequence is KKLYFGRHSTDREVALMMLMAYLSY. A helical transmembrane segment spans residues 263 to 283; it reads MLAELFDLSGILTVFFCGIVM. Residues 284–302 lie on the Vacuolar side of the membrane; that stretch reads SHYTWHNVTESSRITTKHT. N-linked (GlcNAc...) asparagine glycosylation is present at N290. Residues 303–323 form a helical membrane-spanning segment; it reads FATLSFLAETFIFLYVGMDAL. The Cytoplasmic portion of the chain corresponds to 324–342; sequence DIDKWRSVSDTPGTSIAVS. Residues 343–363 traverse the membrane as a helical segment; that stretch reads SILMGLVMVGRAAFVFPLSFL. At 364-378 the chain is on the vacuolar side; it reads SNLAKKNQSEKINFN. N-linked (GlcNAc...) asparagine glycosylation occurs at N370. The chain crosses the membrane as a helical span at residues 379–399; that stretch reads MQVVIWWSGLMRGAVSMALAY. Residues 400–413 are Cytoplasmic-facing; it reads NKFTRAGHTDVRGN. A helical transmembrane segment spans residues 414–434; it reads AIMITSTITVCLFSTVVFGML. Residues 435 to 538 are Vacuolar-facing; that stretch reads TKPLISYLLP…ERNPPDLSKA (104 aa). N447 carries an N-linked (GlcNAc...) asparagine glycan. The segment at 496–518 is interaction with CML18/CAM15; that stretch reads RTVHYYWRQFDDSFMRPVFGGRG.

Belongs to the monovalent cation:proton antiporter 1 (CPA1) transporter (TC 2.A.36) family. As to quaternary structure, calcium and pH-dependent interaction with CML18/CAM15 (increases when pH decreases, better at pH 5.5 than at pH 7.5). Ubiquitous, with higher levels around vascular tissues and guard cells.

It localises to the vacuole membrane. Its subcellular location is the endoplasmic reticulum membrane. The protein localises to the golgi apparatus membrane. It catalyses the reaction Na(+)(in) + H(+)(out) = Na(+)(out) + H(+)(in). The catalysed reaction is K(+)(in) + H(+)(out) = K(+)(out) + H(+)(in). Acts in low affinity electroneutral exchange of protons for cations such as Na(+) or K(+) across membranes. Can also exchange Li(+) and Cs(+) with a lower affinity. Involved in vacuolar ion compartmentalization necessary for cell volume regulation and cytoplasmic Na(+) detoxification. Required during leaves expansion, probably to stimulate epidermal cell expansion. Confers competence to grow in high salinity conditions. The polypeptide is Sodium/hydrogen exchanger 1 (NHX1) (Arabidopsis thaliana (Mouse-ear cress)).